A 459-amino-acid chain; its full sequence is ATP-dependent protease ATPase subunit HslU (459 aa).

ATP is bound by residues Val26, 68–73 (GVGKTE), Asp271, Glu337, and Arg409.

The protein belongs to the ClpX chaperone family. HslU subfamily. As to quaternary structure, a double ring-shaped homohexamer of HslV is capped on each side by a ring-shaped HslU homohexamer. The assembly of the HslU/HslV complex is dependent on binding of ATP.

The protein resides in the cytoplasm. Its function is as follows. ATPase subunit of a proteasome-like degradation complex; this subunit has chaperone activity. The binding of ATP and its subsequent hydrolysis by HslU are essential for unfolding of protein substrates subsequently hydrolyzed by HslV. HslU recognizes the N-terminal part of its protein substrates and unfolds these before they are guided to HslV for hydrolysis. This is ATP-dependent protease ATPase subunit HslU from Xylella fastidiosa (strain 9a5c).